A 1591-amino-acid chain; its full sequence is Rho guanine nucleotide exchange factor TIAM1 (1591 aa).

The disordered stretch occupies residues methionine 1–glutamate 70. A lipid anchor (N-myristoyl glycine) is attached at glycine 2. Residues asparagine 8–alanine 19 show a composition bias toward basic and acidic residues. A compositionally biased stretch (basic residues) spans serine 20 to histidine 49. A compositionally biased stretch (low complexity) spans glutamate 53–serine 67. 3 positions are modified to phosphoserine: serine 231, serine 356, and serine 358. Disordered regions lie at residues glutamine 305–arginine 380 and methionine 393–glutamine 422. Residues threonine 340–proline 359 are compositionally biased toward polar residues. The span at glycine 367 to glycine 376 shows a compositional bias: low complexity. A compositionally biased stretch (polar residues) spans glutamine 412–glutamine 422. Positions valine 434–alanine 549 constitute a PH 1 domain. Serine 695 is subject to Phosphoserine. Residues threonine 765–leucine 832 form the RBD domain. Tyrosine 829 bears the Phosphotyrosine; by NTRK2 mark. The region spanning asparagine 845–serine 908 is the PDZ domain. Residues glycine 933–glutamine 1034 are disordered. The span at leucine 958–glutamate 975 shows a compositional bias: polar residues. A compositionally biased stretch (acidic residues) spans alanine 977–aspartate 990. Residues proline 1014–glutamine 1028 are compositionally biased toward low complexity. A DH domain is found at lysine 1040–methionine 1234. The region spanning aspartate 1261–lysine 1397 is the PH 2 domain. At tyrosine 1323 the chain carries Phosphotyrosine. Residues lysine 1404 and lysine 1420 each participate in a glycyl lysine isopeptide (Lys-Gly) (interchain with G-Cter in ubiquitin) cross-link. Residues threonine 1456–aspartate 1481 are disordered. Serine 1519 carries the phosphoserine modification.

Belongs to the TIAM family. As to quaternary structure, component of the Par polarity complex, composed of at least phosphorylated PRKCZ, PARD3 and TIAM1. Interacts with BAIAP2. Interacts (via PDZ domain) with CNTNAP4, SDC1 and SDC3 (via C-terminus). Interacts with CD44, PARD3 and MAPK8IP2. Interacts with EPHA8; regulates clathrin-mediated endocytosis of EPHA8. Interacts with NTRK2; mediates the activation of RAC1 by BDNF. In terms of processing, ubiquitinated. Undergoes 'Lys-48' ubiquitination at Lys-1404 and Lys-1420 by a CUL3(KBTBD6/7) E3 ubiquitin ligase complex composed of CUL3, RBX1, KBTBD6 and KBTBD7. 'Lys-48' ubiquitination at Lys-1404 and Lys-1420 triggers proteasomal degradation. Ubiquitination at Lys-1404 and Lys-1420 by CUL3(KBTBD6/7) also requires the membrane-associated protein GABARAP and may therefore be spatially restricted within the cell. In terms of tissue distribution, highly expressed in brain and testis and at low or moderate levels in almost all other normal tissues. Found in virtually all analyzed tumor cell lines including B- and T-lymphomas, neuroblastomas, melanomas and carcinomas.

The protein resides in the cell junction. Its subcellular location is the cell membrane. Guanyl-nucleotide exchange factor that activates RHO-like proteins and connects extracellular signals to cytoskeletal activities. Activates RAC1, CDC42, and to a lesser extent RHOA and their downstream signaling to regulate processes like cell adhesion and cell migration. This chain is Rho guanine nucleotide exchange factor TIAM1, found in Mus musculus (Mouse).